The sequence spans 486 residues: Transcription enhancer factor-like protein egl-44 (486 aa).

The segment covering 47–57 has biased composition (low complexity); the sequence is GTTTPTTTSGG. Positions 47 to 87 are disordered; that stretch reads GTTTPTTTSGGQMMTLSPPAGDGPGSAGSMAPESTSSLSDL. The segment at residues 88-164 is a DNA-binding region (TEA); it reads SGDAEGVWSI…QVLARKKLRD (77 aa). The segment at 165 to 188 is disordered; sequence EQAKKKGDIPSLLQQASPPGGVKS.

In terms of assembly, interacts (via N-terminus) with egl-46 (via C-terminus); the interaction is direct; the interaction may regulate transcription. Interacts with yap-1 (via WW domain); the interaction may regulate transcription. As to expression, expressed in HSN neurons in embryos and in the FLP neurons from the L1 stage through to adults. Not expressed in touch cells. Also expressed in larval hypodermis, intestine, pharyngeal muscle and other neurons. In adults expression is lost from some neurons, is weaker in the hypodermis but remains in the intestine. Expressed in HOB neuron, ray neurons RnA and RnB, and the ray structural cell, Rnst; rays are male-specific genital sensilla (simple sense organs).

It is found in the nucleus. Its function is as follows. Transcription factor. Binds to DNA sequence motif 5'-CATNNNNAAATGCAT-3' as a heterodimer with egl-46. Represses expression of genes involved in differentiation of touch receptor neurons (TRN), probably acting as a heterodimer with egl-46, perhaps by occupying similar cis-regulatory elements as an unc-86/mec-3 heterodimer. Plays a role in cell fate specification of neurons, including the hook neuron HOB, and touch receptor neurons. Involved in male mating behavior, acting in concert with egl-46, via modulation of expression of polycystins lov-1 and pkd-2, homeodomain protein ceh-26, and neuropeptide-like protein nlp-8. Acts upstream of egl-46 to prevent touch cell differentiation in FLP neurons. Plays a role in neuron differentiation by repressing the expression of zag-1 in FLP neurons, probably acting as a heterodimer with egl-46; because zag-1 represses expression of egl-46 and egl-44, together these proteins form a bistable, negative-feedback loop that regulates the choice between neuronal fates. Also promotes HSN neuron development. In association with egl-46, regulates cell cycle exit in the neuronal Q cell lineage. Plays a role in specifying commissural dendrites of the PVD nociceptive neurons, acting in concert with egl-46. May be involved in thermal stress response downstream of yap-1. This Caenorhabditis elegans protein is Transcription enhancer factor-like protein egl-44 (egl-44).